A 387-amino-acid chain; its full sequence is Succinyl-diaminopimelate desuccinylase (387 aa).

His-74 provides a ligand contact to Zn(2+). Asp-76 is a catalytic residue. Asp-107 is a binding site for Zn(2+). Glu-142 (proton acceptor) is an active-site residue. The Zn(2+) site is built by Glu-143, Glu-171, and His-360.

Belongs to the peptidase M20A family. DapE subfamily. In terms of assembly, homodimer. Zn(2+) serves as cofactor. The cofactor is Co(2+).

The enzyme catalyses N-succinyl-(2S,6S)-2,6-diaminopimelate + H2O = (2S,6S)-2,6-diaminopimelate + succinate. The protein operates within amino-acid biosynthesis; L-lysine biosynthesis via DAP pathway; LL-2,6-diaminopimelate from (S)-tetrahydrodipicolinate (succinylase route): step 3/3. Its function is as follows. Catalyzes the hydrolysis of N-succinyl-L,L-diaminopimelic acid (SDAP), forming succinate and LL-2,6-diaminopimelate (DAP), an intermediate involved in the bacterial biosynthesis of lysine and meso-diaminopimelic acid, an essential component of bacterial cell walls. In Rhodopseudomonas palustris (strain BisA53), this protein is Succinyl-diaminopimelate desuccinylase.